Reading from the N-terminus, the 261-residue chain is Sulfur carrier protein FdhD (261 aa).

Cys105 (cysteine persulfide intermediate) is an active-site residue. 245-250 (FIRGDR) contacts Mo-bis(molybdopterin guanine dinucleotide).

This sequence belongs to the FdhD family.

It localises to the cytoplasm. In terms of biological role, required for formate dehydrogenase (FDH) activity. Acts as a sulfur carrier protein that transfers sulfur from IscS to the molybdenum cofactor prior to its insertion into FDH. This Listeria monocytogenes serovar 1/2a (strain ATCC BAA-679 / EGD-e) protein is Sulfur carrier protein FdhD.